A 122-amino-acid chain; its full sequence is Large ribosomal subunit protein uL14 (122 aa).

Belongs to the universal ribosomal protein uL14 family. Part of the 50S ribosomal subunit. Forms a cluster with proteins L3 and L19. In the 70S ribosome, L14 and L19 interact and together make contacts with the 16S rRNA in bridges B5 and B8.

In terms of biological role, binds to 23S rRNA. Forms part of two intersubunit bridges in the 70S ribosome. This chain is Large ribosomal subunit protein uL14, found in Limosilactobacillus reuteri (strain DSM 20016) (Lactobacillus reuteri).